The chain runs to 293 residues: 4-diphosphocytidyl-2-C-methyl-D-erythritol kinase (293 aa).

Lys16 is an active-site residue. 99-109 is an ATP binding site; it reads PMGAGLGGGSS. Asp141 is a catalytic residue.

This sequence belongs to the GHMP kinase family. IspE subfamily.

It carries out the reaction 4-CDP-2-C-methyl-D-erythritol + ATP = 4-CDP-2-C-methyl-D-erythritol 2-phosphate + ADP + H(+). It functions in the pathway isoprenoid biosynthesis; isopentenyl diphosphate biosynthesis via DXP pathway; isopentenyl diphosphate from 1-deoxy-D-xylulose 5-phosphate: step 3/6. Catalyzes the phosphorylation of the position 2 hydroxy group of 4-diphosphocytidyl-2C-methyl-D-erythritol. The chain is 4-diphosphocytidyl-2-C-methyl-D-erythritol kinase from Burkholderia cenocepacia (strain HI2424).